Reading from the N-terminus, the 145-residue chain is Basic phospholipase A2 textilotoxin A chain (145 aa).

Positions 1–19 (MHPAHLLVLLGVCVSLLGA) are cleaved as a signal peptide. Residues 20–27 (SDIPPLPL) constitute a propeptide that is removed on maturation. Disulfide bonds link Cys-38–Cys-98, Cys-54–Cys-144, Cys-56–Cys-72, Cys-71–Cys-125, Cys-78–Cys-118, Cys-87–Cys-111, and Cys-105–Cys-116. 3 residues coordinate Ca(2+): Tyr-55, Gly-57, and Gly-59. The active site involves His-75. Residue Asp-76 coordinates Ca(2+). Residue Asp-119 is part of the active site.

It belongs to the phospholipase A2 family. Group I subfamily. D49 sub-subfamily. As to quaternary structure, heterohexamer. 2 forms exist: 2 A or 2 B chains, 2 C chains and 2 covalently-linked D chains, and 1 A or 1 B, 1 C, 2 covalently-linked D chains and 2 differentially glycosylated covalently-linked D chains. Textilotoxin was originally described as pentameric. Ca(2+) serves as cofactor. In terms of tissue distribution, expressed by the venom gland.

It localises to the secreted. It catalyses the reaction a 1,2-diacyl-sn-glycero-3-phosphocholine + H2O = a 1-acyl-sn-glycero-3-phosphocholine + a fatty acid + H(+). Snake venom oligomeric phospholipase A2 that has potent presynaptic neurotoxicity. Chain A possesses a very low toxicity, but is essential for neurotoxicity. Possesses a low enzymatic activity. PLA2 catalyzes the calcium-dependent hydrolysis of the 2-acyl groups in 3-sn-phosphoglycerides. This is Basic phospholipase A2 textilotoxin A chain from Pseudonaja textilis (Eastern brown snake).